Reading from the N-terminus, the 112-residue chain is Phosphoribosyl-AMP cyclohydrolase (112 aa).

D76 lines the Mg(2+) pocket. C77 contacts Zn(2+). D78 and D80 together coordinate Mg(2+). Residues C93 and C100 each contribute to the Zn(2+) site.

Belongs to the PRA-CH family. Homodimer. It depends on Mg(2+) as a cofactor. The cofactor is Zn(2+).

The protein localises to the cytoplasm. The enzyme catalyses 1-(5-phospho-beta-D-ribosyl)-5'-AMP + H2O = 1-(5-phospho-beta-D-ribosyl)-5-[(5-phospho-beta-D-ribosylamino)methylideneamino]imidazole-4-carboxamide. The protein operates within amino-acid biosynthesis; L-histidine biosynthesis; L-histidine from 5-phospho-alpha-D-ribose 1-diphosphate: step 3/9. Catalyzes the hydrolysis of the adenine ring of phosphoribosyl-AMP. This Streptococcus thermophilus (strain ATCC BAA-491 / LMD-9) protein is Phosphoribosyl-AMP cyclohydrolase.